The following is a 282-amino-acid chain: uncharacterized protein (282 aa).

Transmembrane regions (helical) follow at residues 9-29 (LLKI…APHG), 43-63 (ISGR…FLYA), 123-143 (VFVS…LYLV), 158-178 (YIGM…DNIL), and 232-252 (LAAG…ILLM).

This sequence belongs to the steroid 5-alpha reductase family.

It localises to the endoplasmic reticulum membrane. This is an uncharacterized protein from Schizosaccharomyces pombe (strain 972 / ATCC 24843) (Fission yeast).